The sequence spans 409 residues: Aquaporin-10 (409 aa).

Disordered regions lie at residues 1–24 (MADA…TTMP) and 47–74 (ADVN…RPLV). Low complexity predominate over residues 12-22 (TTGTATTAPTT). 2 helical membrane-spanning segments follow: residues 110–130 (FLGS…VVLS) and 138–158 (LSIN…AGGI). The NPA 1 signature appears at 164-166 (NPA). A helical transmembrane segment spans residues 184 to 204 (VYMFAQYAGCICASAIVHAIY). An N-linked (GlcNAc...) asparagine glycan is attached at Asn-215. A run of 2 helical transmembrane segments spans residues 241 to 261 (TGLA…LALT) and 270 to 290 (GGVV…AYGF). The short motif at 297–299 (NPA) is the NPA 2 element. A helical membrane pass occupies residues 339–359 (IPVVGPHLGALLGAAIYFFFI).

It belongs to the MIP/aquaporin (TC 1.A.8) family.

It localises to the cell membrane. Its function is as follows. Aquaglyceroporin that may modulate the water content and osmolytes during anhydrobiosis. The chain is Aquaporin-10 from Milnesium tardigradum (Water bear).